The chain runs to 778 residues: DISP complex protein LRCH3 (778 aa).

10 LRR repeats span residues Ala-56 to His-79, Leu-81 to Phe-104, Val-105 to Leu-127, Gln-128 to Leu-150, Leu-152 to Leu-172, Arg-173 to Leu-195, Ala-197 to Val-218, Leu-220 to Asn-239, Leu-240 to Gly-264, and Ile-266 to Pro-290. The mediates interaction with DOCK7 stretch occupies residues Ala-56–Pro-290. A phosphoserine mark is found at Ser-324, Ser-415, and Ser-419. Residues Thr-382–Thr-642 are mediates direct interaction with MYO6. Positions Gln-511–Gln-536 are disordered. Positions Ser-514 to Pro-523 are enriched in polar residues. A phosphoserine mark is found at Ser-608 and Ser-625. The region spanning Arg-645–Ala-758 is the Calponin-homology (CH) domain. Positions Ala-758–Val-778 are disordered. Residues Pro-768–Val-778 are compositionally biased toward low complexity.

In terms of assembly, component of the DOCK7-induced septin displacement/DISP complex, at least composed of DOCK7, LRCH3 and MYO6.

Its subcellular location is the cytoplasm. Functionally, as part of the DISP complex, may regulate the association of septins with actin and thereby regulate the actin cytoskeleton. The polypeptide is DISP complex protein LRCH3 (Mus musculus (Mouse)).